Reading from the N-terminus, the 156-residue chain is Small ribosomal subunit protein uS7 (156 aa).

This sequence belongs to the universal ribosomal protein uS7 family. Part of the 30S ribosomal subunit. Contacts proteins S9 and S11.

Its function is as follows. One of the primary rRNA binding proteins, it binds directly to 16S rRNA where it nucleates assembly of the head domain of the 30S subunit. Is located at the subunit interface close to the decoding center, probably blocks exit of the E-site tRNA. This Streptococcus suis (strain 98HAH33) protein is Small ribosomal subunit protein uS7.